A 529-amino-acid polypeptide reads, in one-letter code: Bifunctional purine biosynthesis protein PurH (529 aa).

Residues 1–148 (MQQHRPVRRA…KNHKDVAIVV (148 aa)) enclose the MGS-like domain.

The protein belongs to the PurH family.

It carries out the reaction (6R)-10-formyltetrahydrofolate + 5-amino-1-(5-phospho-beta-D-ribosyl)imidazole-4-carboxamide = 5-formamido-1-(5-phospho-D-ribosyl)imidazole-4-carboxamide + (6S)-5,6,7,8-tetrahydrofolate. The catalysed reaction is IMP + H2O = 5-formamido-1-(5-phospho-D-ribosyl)imidazole-4-carboxamide. The protein operates within purine metabolism; IMP biosynthesis via de novo pathway; 5-formamido-1-(5-phospho-D-ribosyl)imidazole-4-carboxamide from 5-amino-1-(5-phospho-D-ribosyl)imidazole-4-carboxamide (10-formyl THF route): step 1/1. It functions in the pathway purine metabolism; IMP biosynthesis via de novo pathway; IMP from 5-formamido-1-(5-phospho-D-ribosyl)imidazole-4-carboxamide: step 1/1. In Erwinia tasmaniensis (strain DSM 17950 / CFBP 7177 / CIP 109463 / NCPPB 4357 / Et1/99), this protein is Bifunctional purine biosynthesis protein PurH.